We begin with the raw amino-acid sequence, 647 residues long: DNA mismatch repair protein MutL (647 aa).

The segment at 377-396 is disordered; sequence EEPQAVKQSAQLWQPPKQEW. Residues 387-396 are compositionally biased toward low complexity; sequence QLWQPPKQEW.

This sequence belongs to the DNA mismatch repair MutL/HexB family.

This protein is involved in the repair of mismatches in DNA. It is required for dam-dependent methyl-directed DNA mismatch repair. May act as a 'molecular matchmaker', a protein that promotes the formation of a stable complex between two or more DNA-binding proteins in an ATP-dependent manner without itself being part of a final effector complex. The sequence is that of DNA mismatch repair protein MutL from Bacillus cereus (strain AH187).